A 459-amino-acid chain; its full sequence is Putative metabolite transport protein YdjK (459 aa).

Residues 1–25 (MEQITKPHCGARLDRLPDCRWHSSM) are Cytoplasmic-facing. Residues 26–46 (FAIVAFGLLVCWSNAVGGLIL) form a helical membrane-spanning segment. The Periplasmic segment spans residues 47-60 (AQLKALGWTDNSTT). Residues 61 to 81 (ATFSAITTAGMFLGALVGGII) traverse the membrane as a helical segment. Topologically, residues 82–90 (GDKTGRRNA) are cytoplasmic. A helical transmembrane segment spans residues 91–111 (FILYEAIHIASMVVGAFSPNM). Residue Asp-112 is a topological domain, periplasmic. A helical transmembrane segment spans residues 113 to 133 (FLIACRFVMGVGLGALLVTLF). At 134–153 (AGFTEYMPGRNRGTWSSRVS) the chain is on the cytoplasmic side. Residues 154–174 (FIGNWSYPLCSLIAMGLTPLI) traverse the membrane as a helical segment. At 175–181 (SAEWNWR) the chain is on the periplasmic side. The chain crosses the membrane as a helical span at residues 182 to 202 (VQLLIPAILSLIATALAWRYF). The Cytoplasmic segment spans residues 203–271 (PESPRWLESR…LLKRVILGSC (69 aa)). Residues 272–292 (VLIAMNVVQYTLINWLPTIFM) traverse the membrane as a helical segment. The Periplasmic portion of the chain corresponds to 293–301 (TQGINLKDS). Residues 302 to 322 (IVLNTMSMFGAPFGIFIAMLV) form a helical membrane-spanning segment. Topologically, residues 323–329 (MDKIPRK) are cytoplasmic. A helical transmembrane segment spans residues 330-350 (TMGVGLLILIAVLGYIYSLQT). Residue Ser-351 is a topological domain, periplasmic. Residues 352-372 (MLLITLIGFFLITFVYMYVCY) traverse the membrane as a helical segment. Residues 373–399 (ASAVYVPEIWPTEAKLRGSGLANAVGR) are Cytoplasmic-facing. Helical transmembrane passes span 400-420 (ISGI…GVTG) and 421-441 (VFIL…TIGI). The Cytoplasmic segment spans residues 442–459 (ETKGVSVESLSIDAVANK).

Belongs to the major facilitator superfamily. Sugar transporter (TC 2.A.1.1) family.

The protein resides in the cell inner membrane. The protein is Putative metabolite transport protein YdjK (ydjK) of Escherichia coli (strain K12).